Consider the following 286-residue polypeptide: Thiazole synthase (286 aa).

Lysine 122 serves as the catalytic Schiff-base intermediate with DXP. 1-deoxy-D-xylulose 5-phosphate-binding positions include glycine 183, 209–210 (AG), and 231–232 (NT).

Belongs to the ThiG family. In terms of assembly, homotetramer. Forms heterodimers with either ThiH or ThiS.

It localises to the cytoplasm. It catalyses the reaction [ThiS sulfur-carrier protein]-C-terminal-Gly-aminoethanethioate + 2-iminoacetate + 1-deoxy-D-xylulose 5-phosphate = [ThiS sulfur-carrier protein]-C-terminal Gly-Gly + 2-[(2R,5Z)-2-carboxy-4-methylthiazol-5(2H)-ylidene]ethyl phosphate + 2 H2O + H(+). It functions in the pathway cofactor biosynthesis; thiamine diphosphate biosynthesis. Functionally, catalyzes the rearrangement of 1-deoxy-D-xylulose 5-phosphate (DXP) to produce the thiazole phosphate moiety of thiamine. Sulfur is provided by the thiocarboxylate moiety of the carrier protein ThiS. In vitro, sulfur can be provided by H(2)S. The polypeptide is Thiazole synthase (Synechococcus elongatus (strain ATCC 33912 / PCC 7942 / FACHB-805) (Anacystis nidulans R2)).